A 148-amino-acid chain; its full sequence is Glutaredoxin-C10 (148 aa).

The tract at residues 16-55 (TLDLTVHPPPPPPLPPPAPSTVSSSTASTSLSFDEEETSE) is disordered. Residues 22–34 (HPPPPPPLPPPAP) are compositionally biased toward pro residues. The span at 35 to 47 (STVSSSTASTSLS) shows a compositional bias: low complexity. The region spanning 55–147 (ESKIGRLISE…PRLVEVGALW (93 aa)) is the Glutaredoxin domain. Cys76 and Cys79 are disulfide-bonded.

This sequence belongs to the glutaredoxin family. CC-type subfamily.

The protein resides in the cytoplasm. Has a glutathione-disulfide oxidoreductase activity in the presence of NADPH and glutathione reductase. Reduces low molecular weight disulfides and proteins. The polypeptide is Glutaredoxin-C10 (GRXC10) (Arabidopsis thaliana (Mouse-ear cress)).